A 328-amino-acid polypeptide reads, in one-letter code: P2Y purinoceptor 3 (328 aa).

Residues 1 to 22 (MSMANFTGGRNSCTFHEEFKQV) are Extracellular-facing. N-linked (GlcNAc...) asparagine glycosylation is present at Asn5. The helical transmembrane segment at 23–43 (LLPLVYSVVFLLGLPLNAVVI) threads the bilayer. Residues 44–57 (GQIWLARKALTRTT) are Cytoplasmic-facing. A helical transmembrane segment spans residues 58 to 78 (IYMLNLAMADLLYVCSLPLLI). The Extracellular portion of the chain corresponds to 79–96 (YNYTQKDYWPFGDFTCKF). Cys94 and Cys172 are oxidised to a cystine. The chain crosses the membrane as a helical span at residues 97 to 117 (VRFQFYTNLHGSILFLTCISV). Over 118–139 (QRYMGICHPLASWHKKKGKKLT) the chain is Cytoplasmic. The chain crosses the membrane as a helical span at residues 140–160 (WLVCAAVWFIVIAQCLPTFVF). Over 161–189 (ASTGTQRNRTVCYDLSPPDRSTSYFPYGI) the chain is Extracellular. A helical transmembrane segment spans residues 190–210 (TLTITGFLLPFAAILACYCSM). Residues 211-231 (ARILCQKDELIGLAVHKKKDK) lie on the Cytoplasmic side of the membrane. The helical transmembrane segment at 232-252 (AVRMIIIVVIVFSISFFPFHL) threads the bilayer. Residues 253–275 (TKTIYLIVRSSASLPCPTLQAFA) are Extracellular-facing. Residues 276 to 298 (IAYKCTRPFASMNSVLDPILFYF) traverse the membrane as a helical segment. At 299–323 (TQRKFRESTRYLLDKMSSKWRQDHC) the chain is on the cytoplasmic side.

This sequence belongs to the G-protein coupled receptor 1 family.

It localises to the cell membrane. Functionally, receptor for extracellular ADP &gt; UTP &gt; ATP = UDP. The activity of this receptor is mediated by G proteins which activate a phosphatidylinositol-calcium second messenger system. The protein is P2Y purinoceptor 3 (P2RY3) of Gallus gallus (Chicken).